The primary structure comprises 708 residues: Leukotoxin translocation ATP-binding protein LktB (708 aa).

In terms of domain architecture, Peptidase C39 spans 1–126 (MEANHQRNDL…ACYQGQLILV (126 aa)). The region spanning 155-437 (FLETLIVSIF…LAQLWQDFQQ (283 aa)) is the ABC transmembrane type-1 domain. 5 consecutive transmembrane segments (helical) span residues 159–179 (LIVS…FQVV), 192–212 (LNII…LSGL), 270–290 (ALTS…MWYY), 296–316 (LVIL…SPIL), and 389–409 (VMVI…LSIG). The ABC transporter domain maps to 469-704 (ISFKNIRFRY…SNGLYSYLHQ (236 aa)). 503–510 (GRSGSGKS) contacts ATP.

This sequence belongs to the ABC transporter superfamily. Protein-1 exporter (TC 3.A.1.109) family. Homodimer.

The protein resides in the cell inner membrane. It catalyses the reaction ATP + H2O + proteinSide 1 = ADP + phosphate + proteinSide 2.. Functionally, part of the ABC transporter complex LktBD involved in leukotoxin export. Transmembrane domains (TMD) form a pore in the inner membrane and the ATP-binding domain (NBD) is responsible for energy generation. This is Leukotoxin translocation ATP-binding protein LktB (lktB) from Mannheimia haemolytica (Pasteurella haemolytica).